Here is a 323-residue protein sequence, read N- to C-terminus: Nucleotide-binding protein ZMO1325 (323 aa).

ATP is bound at residue 25–32 (GLSGAGKS). Position 78-81 (78-81 (DSRT)) interacts with GTP.

It belongs to the RapZ-like family.

Functionally, displays ATPase and GTPase activities. This is Nucleotide-binding protein ZMO1325 from Zymomonas mobilis subsp. mobilis (strain ATCC 31821 / ZM4 / CP4).